The sequence spans 369 residues: Glycine oxidase (369 aa).

FAD-binding positions include 14–15 (II), 34–35 (ES), 42–43 (TT), 47–49 (AGM), and valine 174. Arginine 302 and arginine 329 together coordinate substrate. Residue 327 to 333 (HFRNGIL) coordinates FAD.

Belongs to the DAO family. ThiO subfamily. As to quaternary structure, homotetramer. The cofactor is FAD.

Its subcellular location is the cytoplasm. It carries out the reaction glycine + O2 + H2O = glyoxylate + H2O2 + NH4(+). It catalyses the reaction N-ethylglycine + O2 + H2O = ethylamine + glyoxylate + H2O2. The enzyme catalyses sarcosine + O2 + H2O = methylamine + glyoxylate + H2O2. The catalysed reaction is D-alanine + O2 + H2O = pyruvate + H2O2 + NH4(+). It carries out the reaction glyphosate + O2 + H2O = aminomethylphosphonate + glyoxylate + H2O2 + H(+). Its pathway is cofactor biosynthesis; thiamine diphosphate biosynthesis. Its activity is regulated as follows. Is competitively inhibited by glycolate. In terms of biological role, catalyzes the FAD-dependent oxidative deamination of various amines and D-amino acids to yield the corresponding alpha-keto acids, ammonia/amine, and hydrogen peroxide. Oxidizes sarcosine (N-methylglycine), N-ethylglycine and glycine. Can also oxidize the herbicide glyphosate (N-phosphonomethylglycine). Displays lower activities on D-alanine, D-valine, D-proline and D-methionine. Does not act on L-amino acids and other D-amino acids. Is essential for thiamine biosynthesis since the oxidation of glycine catalyzed by ThiO generates the glycine imine intermediate (dehydroglycine) required for the biosynthesis of the thiazole ring of thiamine pyrophosphate. This Bacillus subtilis (strain 168) protein is Glycine oxidase.